A 379-amino-acid chain; its full sequence is Oxidoreductase chry3 (379 aa).

Disordered regions lie at residues 1-23 (MTTA…QPTP) and 126-150 (EGDD…TSHM). The segment covering 126-138 (EGDDSAPAEEEAD) has biased composition (acidic residues).

It belongs to the asaB hydroxylase/desaturase family.

The protein operates within pigment biosynthesis. Its function is as follows. Oxidoreductase; part of the gene cluster that mediates the biosynthesis of the yellow pigment chrysogine. Pyruvic acid and anthranilic acid are likely substrates for the nonribosomal peptide synthetase chry1/NRPS14, with pyruvic acid adenylated by the first A domain and anthranilic acid by the second. If pyruvic acid and anthranilic acid are merged and released from chry1/NRPS14 by hydrolysis, a subsequent amidation would lead to 2-pyruvoylaminobenzamide. This process is probably catalyzed by the amidotransferase chry2 using glutamine as amino donor. The dehydrogenase chry5 that has a terminal berberine bridge domain for C-N cyclization could catalyze the cyclization of 2-pyruvoylaminobenzamide to yield acetyl-4(3H)-quinazolidinone. A final reduction of acetyl-4(3H)-quinazolidinone catalyzed by the oxidoreductase chry4 would result in chrysogine. This Gibberella zeae (strain ATCC MYA-4620 / CBS 123657 / FGSC 9075 / NRRL 31084 / PH-1) (Wheat head blight fungus) protein is Oxidoreductase chry3.